The sequence spans 577 residues: Arginine--tRNA ligase (577 aa).

The 'HIGH' region signature appears at 122–132 (PNVAKEMHVGH).

The protein belongs to the class-I aminoacyl-tRNA synthetase family. Monomer.

Its subcellular location is the cytoplasm. It catalyses the reaction tRNA(Arg) + L-arginine + ATP = L-arginyl-tRNA(Arg) + AMP + diphosphate. In Escherichia coli O157:H7 (strain EC4115 / EHEC), this protein is Arginine--tRNA ligase.